The primary structure comprises 314 residues: GTP-binding protein gtr2 (314 aa).

Positions 17, 18, 37, 118, and 121 each coordinate GTP.

This sequence belongs to the GTR/RAG GTP-binding protein family.

The protein localises to the vacuole membrane. It localises to the cytoplasm. It is found in the nucleus. The enzyme catalyses GTP + H2O = GDP + phosphate + H(+). In terms of biological role, GTPase involved in activation of the TORC1 signaling pathway, which promotes growth and represses autophagy in nutrient-rich conditions. Also required for TORC1 inactivation during nitrogen starvation. This chain is GTP-binding protein gtr2 (gtr2), found in Schizosaccharomyces pombe (strain 972 / ATCC 24843) (Fission yeast).